The sequence spans 119 residues: Large ribosomal subunit protein uL22 (119 aa).

It belongs to the universal ribosomal protein uL22 family. In terms of assembly, part of the 50S ribosomal subunit.

Functionally, this protein binds specifically to 23S rRNA; its binding is stimulated by other ribosomal proteins, e.g. L4, L17, and L20. It is important during the early stages of 50S assembly. It makes multiple contacts with different domains of the 23S rRNA in the assembled 50S subunit and ribosome. Its function is as follows. The globular domain of the protein is located near the polypeptide exit tunnel on the outside of the subunit, while an extended beta-hairpin is found that lines the wall of the exit tunnel in the center of the 70S ribosome. The chain is Large ribosomal subunit protein uL22 from Chlorobium luteolum (strain DSM 273 / BCRC 81028 / 2530) (Pelodictyon luteolum).